A 180-amino-acid chain; its full sequence is Anaerobic nitrite reductase GLB0 (180 aa).

Positions 23 to 172 (TYSKENEQLV…LAEQVKAEMH (150 aa)) constitute a Globin domain. The Homodimerization signature appears at 56 to 60 (EIAPG). Heme b contacts are provided by Ser66, Lys80, His84, Lys114, Thr118, and His119. The short motif at 126-138 (DDQFEIVKEAILY) is the Homodimerization element.

It belongs to the plant globin family. In terms of assembly, homodimer. Heme b serves as cofactor.

The protein localises to the cytoplasm. It localises to the nucleus. It carries out the reaction Fe(III)-heme b-[protein] + nitric oxide + H2O = Fe(II)-heme b-[protein] + nitrite + 2 H(+). Functionally, phytoglobin that reduces nitrite to nitric oxide (NO) under anoxic conditions (e.g. during flooding or in waterlogged soil). May not function as an oxygen storage or transport protein. Has an unusually high affinity for O(2) through an hexacoordinate heme iron because of a very low dissociation constant. This chain is Anaerobic nitrite reductase GLB0, found in Physcomitrium patens (Spreading-leaved earth moss).